A 197-amino-acid chain; its full sequence is ATP-dependent Clp protease proteolytic subunit (197 aa).

Residue Ser-100 is the Nucleophile of the active site. Residue His-125 is part of the active site.

The protein belongs to the peptidase S14 family. As to quaternary structure, component of the chloroplastic Clp protease core complex.

The protein localises to the plastid. It localises to the chloroplast stroma. It carries out the reaction Hydrolysis of proteins to small peptides in the presence of ATP and magnesium. alpha-casein is the usual test substrate. In the absence of ATP, only oligopeptides shorter than five residues are hydrolyzed (such as succinyl-Leu-Tyr-|-NHMec, and Leu-Tyr-Leu-|-Tyr-Trp, in which cleavage of the -Tyr-|-Leu- and -Tyr-|-Trp bonds also occurs).. Cleaves peptides in various proteins in a process that requires ATP hydrolysis. Has a chymotrypsin-like activity. Plays a major role in the degradation of misfolded proteins. This chain is ATP-dependent Clp protease proteolytic subunit, found in Angiopteris evecta (Mule's foot fern).